A 279-amino-acid polypeptide reads, in one-letter code: Prohibitin-4, mitochondrial (279 aa).

Gly2 carries the post-translational modification N-acetylglycine. Topologically, residues 2-6 are mitochondrial matrix; it reads GSQQV. The helical; Signal-anchor for type II membrane protein transmembrane segment at 7-28 threads the bilayer; sequence AISFLTNLAKAAFGLGVAATAL. Over 29 to 279 the chain is Mitochondrial intermembrane; sequence NSSLYTVDGG…SMLFNLNPGR (251 aa).

Belongs to the prohibitin family. In terms of assembly, component of a prohibitin multimeric complex in mitochondrial membranes. Mostly expressed in proliferative tissues, including vasculature, shoot and root apical tissues. Accumulates in dry seeds.

The protein resides in the mitochondrion inner membrane. Functionally, prohibitin probably acts as a holdase/unfoldase for the stabilization of newly synthesized mitochondrial proteins. The sequence is that of Prohibitin-4, mitochondrial (PHB4) from Arabidopsis thaliana (Mouse-ear cress).